Consider the following 335-residue polypeptide: Capsular polysaccharide phosphotransferase WcwK (335 aa).

Belongs to the stealth family.

This Streptococcus pneumoniae protein is Capsular polysaccharide phosphotransferase WcwK (wcwK).